The primary structure comprises 552 residues: Cytochrome c oxidase subunit 1 (552 aa).

Residues 35–55 traverse the membrane as a helical segment; that stretch reads VIGIQYLVTAFIFYLIGGLMA. Fe(II)-heme a is bound at residue histidine 82. Transmembrane regions (helical) follow at residues 85-105, 120-140, 164-184, 211-231, 252-272, and 284-304; these read IMIF…YLVP, ALAF…FLFG, WILA…NFIV, LLAL…LFDI, LFWF…FGIM, and IFGY…GLFV. Cu cation-binding residues include histidine 258 and tyrosine 262. The 1'-histidyl-3'-tyrosine (His-Tyr) cross-link spans 258 to 262; that stretch reads HPAVY. Cu cation is bound by residues histidine 307 and histidine 308. A run of 5 helical transmembrane segments spans residues 321 to 341, 355 to 375, 390 to 410, 426 to 446, and 470 to 490; these read FFTI…FSWV, MLFA…GVTL, VVAH…YAGI, LGIL…LPMH, and ICTI…INII. Histidine 393 provides a ligand contact to heme a3. Histidine 395 contributes to the Fe(II)-heme a binding site.

The protein belongs to the heme-copper respiratory oxidase family. The cofactor is Cu(2+). Heme serves as cofactor.

Its subcellular location is the cell membrane. It catalyses the reaction 4 Fe(II)-[cytochrome c] + O2 + 8 H(+)(in) = 4 Fe(III)-[cytochrome c] + 2 H2O + 4 H(+)(out). Its pathway is energy metabolism; oxidative phosphorylation. Its function is as follows. Cytochrome c oxidase is the component of the respiratory chain that catalyzes the reduction of oxygen to water. Subunits 1-3 form the functional core of the enzyme complex. CO I is the catalytic subunit of the enzyme. Electrons originating in cytochrome c are transferred via the copper A center of subunit 2 and heme A of subunit 1 to the bimetallic center formed by heme A3 and copper B. The polypeptide is Cytochrome c oxidase subunit 1 (ctaD) (Thermostichus vulcanus (Synechococcus vulcanus)).